The following is a 292-amino-acid chain: Bifunctional protein FolD (292 aa).

NADP(+) is bound by residues Gly-161–Ser-163 and Ile-231.

It belongs to the tetrahydrofolate dehydrogenase/cyclohydrolase family. As to quaternary structure, homodimer.

The catalysed reaction is (6R)-5,10-methylene-5,6,7,8-tetrahydrofolate + NADP(+) = (6R)-5,10-methenyltetrahydrofolate + NADPH. It catalyses the reaction (6R)-5,10-methenyltetrahydrofolate + H2O = (6R)-10-formyltetrahydrofolate + H(+). The protein operates within one-carbon metabolism; tetrahydrofolate interconversion. Catalyzes the oxidation of 5,10-methylenetetrahydrofolate to 5,10-methenyltetrahydrofolate and then the hydrolysis of 5,10-methenyltetrahydrofolate to 10-formyltetrahydrofolate. The sequence is that of Bifunctional protein FolD from Protochlamydia amoebophila (strain UWE25).